The chain runs to 213 residues: Phosphatidylserine decarboxylase proenzyme (213 aa).

The Schiff-base intermediate with substrate; via pyruvic acid role is filled by Ser-182. Ser-182 is subject to Pyruvic acid (Ser); by autocatalysis.

This sequence belongs to the phosphatidylserine decarboxylase family. PSD-A subfamily. In terms of assembly, heterodimer of a large membrane-associated beta subunit and a small pyruvoyl-containing alpha subunit. Requires pyruvate as cofactor. In terms of processing, is synthesized initially as an inactive proenzyme. Formation of the active enzyme involves a self-maturation process in which the active site pyruvoyl group is generated from an internal serine residue via an autocatalytic post-translational modification. Two non-identical subunits are generated from the proenzyme in this reaction, and the pyruvate is formed at the N-terminus of the alpha chain, which is derived from the carboxyl end of the proenzyme. The post-translation cleavage follows an unusual pathway, termed non-hydrolytic serinolysis, in which the side chain hydroxyl group of the serine supplies its oxygen atom to form the C-terminus of the beta chain, while the remainder of the serine residue undergoes an oxidative deamination to produce ammonia and the pyruvoyl prosthetic group on the alpha chain.

Its subcellular location is the cell membrane. It carries out the reaction a 1,2-diacyl-sn-glycero-3-phospho-L-serine + H(+) = a 1,2-diacyl-sn-glycero-3-phosphoethanolamine + CO2. The protein operates within phospholipid metabolism; phosphatidylethanolamine biosynthesis; phosphatidylethanolamine from CDP-diacylglycerol: step 2/2. Catalyzes the formation of phosphatidylethanolamine (PtdEtn) from phosphatidylserine (PtdSer). The protein is Phosphatidylserine decarboxylase proenzyme of Chlorobium phaeobacteroides (strain BS1).